A 369-amino-acid polypeptide reads, in one-letter code: Protein RIC-3 (369 aa).

Residues 1-28 form the signal peptide; the sequence is MAYSTVQRVALASGLVLALSLLLPKAFL. Residues 29–95 are Lumenal-facing; sequence SRGKRQEPPP…AGGGGSGRGL (67 aa). The disordered stretch occupies residues 30–67; it reads RGKRQEPPPTPEGKLGRFPPMMHHHQAPSDGQTPGARF. A helical transmembrane segment spans residues 96 to 116; sequence MGQIIPIYGFGIFLYILYILF. Over 117–369 the chain is Cytoplasmic; it reads KLSKGKTTAE…LRKRNPQGLE (253 aa). Residues 140–169 adopt a coiled-coil conformation; the sequence is RKITSFELAQLQEKLKETEAAMEKLINRVG. K202 carries the post-translational modification N6-acetyllysine; alternate. Residue K202 forms a Glycyl lysine isopeptide (Lys-Gly) (interchain with G-Cter in ubiquitin); alternate linkage. 2 disordered regions span residues 272–295 and 316–369; these read ESDHLGWESLPTDPRAQEDNSVTS and LAEN…QGLE. Residues 332-346 show a composition bias toward basic and acidic residues; the sequence is ETTKEEWSQDFKDEG. Residues 360–369 are compositionally biased toward basic residues; it reads LRKRNPQGLE.

The protein belongs to the ric-3 family. Monomer and homodimer. Interacts with CHRNA7, CHRNA3, CHRNA4, CHRNB2, CHRNB4 and HTR3A. In terms of tissue distribution, broadly expressed, with high levels in muscle, brain, heart, pancreas and testis. In the central nervous system, highest levels are detected in the cerebellum and pituitary gland. Over-expressed in brains from patients with bipolar disease or schizophrenia. Isoform 5 is predominantly expressed in the brain.

It localises to the endoplasmic reticulum membrane. The protein resides in the golgi apparatus membrane. Molecular chaperone which facilitates proper subunit assembly and surface trafficking of alpha-7 (CHRNA7) and alpha-8 (CHRNA8) nicotinic acetylcholine receptors. May also promote functional expression of homomeric serotoninergic 5-HT3 receptors, and of heteromeric acetylcholine receptors alpha-3/beta-2, alpha-3/beta-4, alpha-4/beta-2 and alpha-4/beta-4. The polypeptide is Protein RIC-3 (RIC3) (Homo sapiens (Human)).